The chain runs to 390 residues: Copper-containing nitrite reductase (390 aa).

An N-terminal signal peptide occupies residues 1-18 (MKRQALAAMIASLFALAA). Cys19 is lipidated: N-palmitoyl cysteine. Cys19 is lipidated: S-diacylglycerol cysteine. A disordered region spans residues 30–51 (ETPAAAAEAASSAAQTAAETPS). Plastocyanin-like domains follow at residues 101 to 195 (WTFD…ILVE) and 245 to 346 (GHVG…LKVE). Residues His134, His139, His174, Cys175, His183, and Met188 each coordinate Cu cation. A substrate-binding site is contributed by His139. A substrate-binding site is contributed by His280. His329 contacts Cu cation. The tract at residues 367-390 (GAAPAASAPAASAPAASASEKSVY) is disordered. Residues 368–390 (AAPAASAPAASAPAASASEKSVY) are compositionally biased toward low complexity. 3 consecutive repeat copies span residues 371–375 (AASAP), 376–380 (AASAP), and 381–385 (AASAS). The segment at 371–385 (AASAPAASAPAASAS) is 3 X 5 AA tandem repeats of A-A-S-A-P.

It belongs to the multicopper oxidase family. As to quaternary structure, homotrimer. It depends on Cu(+) as a cofactor. Cu(2+) is required as a cofactor.

The protein resides in the cell outer membrane. The enzyme catalyses nitric oxide + Fe(III)-[cytochrome c] + H2O = Fe(II)-[cytochrome c] + nitrite + 2 H(+). In terms of biological role, catalyzes the reduction of nitrite to nitric oxide (NO). It could be essential for growth and survival in oxygen-depleted environments. In Neisseria meningitidis serogroup B (strain ATCC BAA-335 / MC58), this protein is Copper-containing nitrite reductase (aniA).